Reading from the N-terminus, the 442-residue chain is MKMPKNNVYTVSRLNGEVRQLLEGELGKVWLEAEISNFSAPSSGHWYLTLKDNYAQIRAAMFKGRNRAVTFRPANGQQVLVKGAISVYEPRGDYQLIIDSMLPAGDGLLAQQYEALKMKLAAEGLFAADTKRPLPSNIQRIGVVTSATGAAIRDVLHVLKRRDPSIEVIIYPSQVQGEHADKSLCHAIMQANDRMEVDVLLLTRGGGSLEDLWCFNSEALAHTIYNSALPVVSAVGHEVDTTISDYVADLRAPTPSAAAELLSQDALSKADKLRMTMTRLKQGWQHYGLKQAQRFSQLHHRLERQDPKRRLQQYEQRFDELQLRLGAALTGKLHQMERRQQSLHARLNQVSPSHQLALAASRLTHQNQRLHSAMQARLNSAEKSLQYAAHQLETVSPLATLSRGYSITLDTEGKVLHSAQDVRTGARLTTKLVDGEVQSTVI.

It belongs to the XseA family. In terms of assembly, heterooligomer composed of large and small subunits.

The protein resides in the cytoplasm. The enzyme catalyses Exonucleolytic cleavage in either 5'- to 3'- or 3'- to 5'-direction to yield nucleoside 5'-phosphates.. Functionally, bidirectionally degrades single-stranded DNA into large acid-insoluble oligonucleotides, which are then degraded further into small acid-soluble oligonucleotides. This is Exodeoxyribonuclease 7 large subunit from Shewanella loihica (strain ATCC BAA-1088 / PV-4).